A 274-amino-acid chain; its full sequence is Penicillin-insensitive murein endopeptidase (274 aa).

Positions 1 to 19 (MKKTVIALLAWFVSSASLA) are cleaved as a signal peptide. Intrachain disulfides connect Cys-44–Cys-265, Cys-187–Cys-235, and Cys-216–Cys-223. His-110, His-113, Asp-120, Asp-147, His-150, and His-211 together coordinate Zn(2+). The interval 225–274 (DQPLPPPGDGCGAELQSWFEPPKPGTTKPEKKTPPPLPPSCQALLDEHVL) is disordered.

It belongs to the peptidase M74 family. As to quaternary structure, dimer. Requires Zn(2+) as cofactor.

Its subcellular location is the periplasm. Its function is as follows. Murein endopeptidase that cleaves the D-alanyl-meso-2,6-diamino-pimelyl amide bond that connects peptidoglycan strands. Likely plays a role in the removal of murein from the sacculus. The sequence is that of Penicillin-insensitive murein endopeptidase from Salmonella paratyphi C (strain RKS4594).